The following is a 426-amino-acid chain: Serine--tRNA ligase (426 aa).

233–235 (TAE) is an L-serine binding site. 264 to 266 (RAE) is a binding site for ATP. Glutamate 287 contributes to the L-serine binding site. 351-354 (EISS) provides a ligand contact to ATP. Position 387 (serine 387) interacts with L-serine.

Belongs to the class-II aminoacyl-tRNA synthetase family. Type-1 seryl-tRNA synthetase subfamily. In terms of assembly, homodimer. The tRNA molecule binds across the dimer.

The protein localises to the cytoplasm. The catalysed reaction is tRNA(Ser) + L-serine + ATP = L-seryl-tRNA(Ser) + AMP + diphosphate + H(+). The enzyme catalyses tRNA(Sec) + L-serine + ATP = L-seryl-tRNA(Sec) + AMP + diphosphate + H(+). The protein operates within aminoacyl-tRNA biosynthesis; selenocysteinyl-tRNA(Sec) biosynthesis; L-seryl-tRNA(Sec) from L-serine and tRNA(Sec): step 1/1. Catalyzes the attachment of serine to tRNA(Ser). Is also able to aminoacylate tRNA(Sec) with serine, to form the misacylated tRNA L-seryl-tRNA(Sec), which will be further converted into selenocysteinyl-tRNA(Sec). In Clostridium novyi (strain NT), this protein is Serine--tRNA ligase.